The following is a 293-amino-acid chain: Undecaprenyl-diphosphatase (293 aa).

7 helical membrane-spanning segments follow: residues isoleucine 3 to proline 23, lysine 43 to phenylalanine 63, leucine 85 to isoleucine 105, leucine 109 to alanine 129, valine 203 to glutamate 223, isoleucine 238 to leucine 258, and phenylalanine 269 to isoleucine 289.

The protein belongs to the UppP family.

It is found in the cell inner membrane. It carries out the reaction di-trans,octa-cis-undecaprenyl diphosphate + H2O = di-trans,octa-cis-undecaprenyl phosphate + phosphate + H(+). In terms of biological role, catalyzes the dephosphorylation of undecaprenyl diphosphate (UPP). Confers resistance to bacitracin. This is Undecaprenyl-diphosphatase from Ralstonia nicotianae (strain ATCC BAA-1114 / GMI1000) (Ralstonia solanacearum).